The following is a 427-amino-acid chain: GTPase Obg (427 aa).

Positions 1 to 158 constitute an Obg domain; the sequence is MFVDQVKIYV…RDVTLELKVL (158 aa). An OBG-type G domain is found at 159-329; the sequence is ADVGLVGFPS…LLFEVANLLE (171 aa). GTP-binding positions include 165-172, 190-194, 212-215, 282-285, and 310-312; these read GFPSVGKS, FTTIV, DLPG, NKMD, and SAV. 2 residues coordinate Mg(2+): Ser172 and Thr192. Positions 349–427 constitute an OCT domain; sequence YKFESESNFE…ILEYQFEFID (79 aa).

Belongs to the TRAFAC class OBG-HflX-like GTPase superfamily. OBG GTPase family. Monomer. Mg(2+) serves as cofactor.

The protein localises to the cytoplasm. Functionally, an essential GTPase which binds GTP, GDP and possibly (p)ppGpp with moderate affinity, with high nucleotide exchange rates and a fairly low GTP hydrolysis rate. Plays a role in control of the cell cycle, stress response, ribosome biogenesis and in those bacteria that undergo differentiation, in morphogenesis control. The polypeptide is GTPase Obg (Bacillus mycoides (strain KBAB4) (Bacillus weihenstephanensis)).